The following is a 1111-amino-acid chain: Cellulose synthase-like protein D4 (1111 aa).

Disordered regions lie at residues 1–26 (MAST…KFAR) and 175–202 (DYSS…MMKR). Over residues 192 to 202 (GNNNNMSMMKR) the composition is skewed to polar residues. The next 2 helical transmembrane spans lie at 266–286 (AIIS…CFFL) and 297–317 (AIWL…SWIL). Active-site residues include Asp397 and Asp809. A run of 6 helical transmembrane segments spans residues 891–911 (LFLI…QFIV), 914–934 (LSIS…GLAV), 963–983 (LYAV…SFTL), 1007–1027 (LMIP…VAFI), 1040–1060 (LIGG…FAKG), and 1070–1090 (TIVF…WTAI).

The protein belongs to the glycosyltransferase 2 family. Plant cellulose synthase-like D subfamily.

The protein resides in the golgi apparatus membrane. Its function is as follows. Thought to be a Golgi-localized beta-glycan synthase that polymerize the backbones of noncellulosic polysaccharides (hemicelluloses) of plant cell wall. In Arabidopsis thaliana (Mouse-ear cress), this protein is Cellulose synthase-like protein D4 (CSLD4).